A 571-amino-acid chain; its full sequence is Septation ring formation regulator EzrA (571 aa).

The Extracellular segment spans residues 1–3; that stretch reads MYY. Residues 4 to 22 form a helical membrane-spanning segment; that stretch reads MLIGFIIVVIAVISAGYIL. Residues 23 to 571 are Cytoplasmic-facing; it reads KRKHYQRINE…ESKVSVDDIE (549 aa). Coiled coils occupy residues 170 to 215, 248 to 299, 326 to 374, 400 to 437, and 478 to 529; these read EAKL…QMER, LAQM…TLEH, DALA…ASGE, NFAEELRSLRKDELEARDDAERMRRAIITLDRKMERER, and RIAE…ENHF.

It belongs to the EzrA family.

It is found in the cell membrane. Its function is as follows. Negative regulator of FtsZ ring formation; modulates the frequency and position of FtsZ ring formation. Inhibits FtsZ ring formation at polar sites. Interacts either with FtsZ or with one of its binding partners to promote depolymerization. This chain is Septation ring formation regulator EzrA, found in Listeria innocua serovar 6a (strain ATCC BAA-680 / CLIP 11262).